Here is a 1547-residue protein sequence, read N- to C-terminus: Vacuolar membrane-associated protein IML1 (1547 aa).

2 disordered regions span residues 489–517 (HAPTAVTSKTPPPKASVKVADVRPSPAAS) and 597–632 (LPFAPNLKPKKSTSTLSQSPTYNRIAATPDQEVERR). Residues 608–618 (STSTLSQSPTY) show a composition bias toward polar residues. Residues 1018–1093 (PKGGIRFFDR…DGHYFYQLKS (76 aa)) form the DEP domain. The segment at 1393 to 1547 (NLSPEASPGT…DKGKEVEDDK (155 aa)) is disordered. The segment covering 1419–1450 (IEAKMEGRVESPQVEWREDVEIAPEVEHKGGA) has biased composition (basic and acidic residues). Composition is skewed to acidic residues over residues 1451–1464 (DGDENDEEGDEKSE) and 1482–1494 (QDGENENENENEN). Positions 1495–1547 (ENSKDNKANETTSEVKEVPAGVEIEHKEHVEEDKSDGPEPKKEDKGKEVEDDK) are enriched in basic and acidic residues.

It belongs to the IML1 family.

The protein resides in the vacuole membrane. This Yarrowia lipolytica (strain CLIB 122 / E 150) (Yeast) protein is Vacuolar membrane-associated protein IML1 (IML1).